Reading from the N-terminus, the 161-residue chain is Cell division protein SepF 2 (161 aa).

A disordered region spans residues 19 to 47 (EDSEKAPELSSSRETKTKNQNQSKSLLRS). Basic and acidic residues predominate over residues 21 to 35 (SEKAPELSSSRETKT).

The protein belongs to the SepF family. As to quaternary structure, homodimer. Interacts with FtsZ.

The protein localises to the cytoplasm. Cell division protein that is part of the divisome complex and is recruited early to the Z-ring. Probably stimulates Z-ring formation, perhaps through the cross-linking of FtsZ protofilaments. Its function overlaps with FtsA. This is Cell division protein SepF 2 from Desulforamulus reducens (strain ATCC BAA-1160 / DSM 100696 / MI-1) (Desulfotomaculum reducens).